Here is a 227-residue protein sequence, read N- to C-terminus: UPF0758 protein CPF_2399 (227 aa).

An MPN domain is found at 105–227 (KISKPSDVAK…FISLKEKDIL (123 aa)). H176, H178, and D189 together coordinate Zn(2+). A JAMM motif motif is present at residues 176-189 (HNHPSGDPTPSRDD).

This sequence belongs to the UPF0758 family.

The polypeptide is UPF0758 protein CPF_2399 (Clostridium perfringens (strain ATCC 13124 / DSM 756 / JCM 1290 / NCIMB 6125 / NCTC 8237 / Type A)).